The following is a 468-amino-acid chain: Ribulose bisphosphate carboxylase large chain (468 aa).

The residue at position 7 (Lys-7) is an N6,N6,N6-trimethyllysine. Substrate contacts are provided by Asn-116 and Thr-166. Lys-168 (proton acceptor) is an active-site residue. Residue Lys-170 participates in substrate binding. Positions 194, 196, and 197 each coordinate Mg(2+). Residue Lys-194 is modified to N6-carboxylysine. The active-site Proton acceptor is His-287. Substrate-binding residues include Arg-288, His-320, and Ser-372.

The protein belongs to the RuBisCO large chain family. Type I subfamily. In terms of assembly, heterohexadecamer of 8 large chains and 8 small chains; disulfide-linked. The disulfide link is formed within the large subunit homodimers. It depends on Mg(2+) as a cofactor. The disulfide bond which can form in the large chain dimeric partners within the hexadecamer appears to be associated with oxidative stress and protein turnover.

The protein localises to the plastid. Its subcellular location is the chloroplast. It catalyses the reaction 2 (2R)-3-phosphoglycerate + 2 H(+) = D-ribulose 1,5-bisphosphate + CO2 + H2O. The catalysed reaction is D-ribulose 1,5-bisphosphate + O2 = 2-phosphoglycolate + (2R)-3-phosphoglycerate + 2 H(+). Functionally, ruBisCO catalyzes two reactions: the carboxylation of D-ribulose 1,5-bisphosphate, the primary event in carbon dioxide fixation, as well as the oxidative fragmentation of the pentose substrate in the photorespiration process. Both reactions occur simultaneously and in competition at the same active site. This chain is Ribulose bisphosphate carboxylase large chain, found in Cornus alternifolia (Pagoda dogwood).